A 235-amino-acid chain; its full sequence is Ribosomal RNA small subunit methyltransferase G (235 aa).

Residues glycine 74, leucine 79, 124 to 125, and arginine 142 contribute to the S-adenosyl-L-methionine site; that span reads AE. Positions 211–235 are disordered; the sequence is RRRAAKPGRNKSGRTARSRGRTGRR. The span at 213 to 235 shows a compositional bias: basic residues; that stretch reads RAAKPGRNKSGRTARSRGRTGRR.

It belongs to the methyltransferase superfamily. RNA methyltransferase RsmG family.

The protein resides in the cytoplasm. Specifically methylates the N7 position of guanine in position 518 of 16S rRNA. This Mycolicibacterium smegmatis (strain ATCC 700084 / mc(2)155) (Mycobacterium smegmatis) protein is Ribosomal RNA small subunit methyltransferase G.